The chain runs to 462 residues: Zinc finger CCCH domain-containing protein 34 (462 aa).

Positions 1 to 13 (MERYGRPGEEGSR) are enriched in basic and acidic residues. A disordered region spans residues 1–26 (MERYGRPGEEGSRSDPSLEWTSHGGE). C3H1-type zinc fingers lie at residues 54–82 (RPDE…HPRD), 100–128 (RMGH…HPRQ), and 148–176 (RPGE…HPVP). The span at 288–303 (TGTYQSVPSSNSTSKE) shows a compositional bias: polar residues. The segment at 288–310 (TGTYQSVPSSNSTSKEFPQRPDQ) is disordered. C3H1-type zinc fingers lie at residues 307-335 (RPDQ…HPVD) and 353-381 (RPGV…HSMS). The span at 405–418 (SSSLSGSSAPVSSS) shows a compositional bias: low complexity. Positions 405–462 (SSSLSGSSAPVSSSNEPTKEAVTPAVSSMVSGLSRPEPAETSGDSASVSGSIEAKTSS) are disordered. A compositionally biased stretch (polar residues) spans 446 to 462 (SGDSASVSGSIEAKTSS).

It localises to the nucleus. The chain is Zinc finger CCCH domain-containing protein 34 from Arabidopsis thaliana (Mouse-ear cress).